A 60-amino-acid polypeptide reads, in one-letter code: Small ribosomal subunit protein eS31 (60 aa).

Zn(2+) contacts are provided by Cys-27, Cys-30, Cys-45, and Cys-48. The segment at Cys-27 to Cys-48 adopts a C4-type zinc-finger fold.

This sequence belongs to the eukaryotic ribosomal protein eS31 family. As to quaternary structure, part of the 30S ribosomal subunit. The cofactor is Zn(2+).

The chain is Small ribosomal subunit protein eS31 from Methanocaldococcus jannaschii (strain ATCC 43067 / DSM 2661 / JAL-1 / JCM 10045 / NBRC 100440) (Methanococcus jannaschii).